A 183-amino-acid polypeptide reads, in one-letter code: Chromophore lyase CpcT/CpeT 4 (183 aa).

It belongs to the CpcT/CpeT biliprotein lyase family.

Its function is as follows. Covalently attaches a chromophore to Cys residue(s) of phycobiliproteins. In Gloeobacter violaceus (strain ATCC 29082 / PCC 7421), this protein is Chromophore lyase CpcT/CpeT 4.